Reading from the N-terminus, the 1110-residue chain is Sex-determining transformer protein 1 (1110 aa).

2 disordered regions span residues 1-103 (MMAP…AQQS) and 170-202 (TINGKRVGRPPGTFKRPQNNAANSSNSGNDSDM). Residues 44–61 (GSEDKQPGGGDVKTENDP) are compositionally biased toward basic and acidic residues. Positions 65-90 (GLGSATSNFIQSSVPPSHQTLSNPLQ) are enriched in polar residues. A compositionally biased stretch (low complexity) spans 188–201 (NNAANSSNSGNDSD). The C2H2-type 1; low DNA-binding affinity zinc finger occupies 208–233 (LTCRWKSCNSSFQTLKALVDHVQESH). The C2H2-type 2; low DNA-binding affinity zinc finger occupies 244–270 (WRCEWEGCDRNETFKALYMLIVHVRRH). C2H2-type zinc fingers lie at residues 276-300 (NKCEYPGCGKEYSRLENLKTHRRTH), 306-331 (YKCEFADCEKAFSNASDRAKHQNRTH), and 337-362 (YSCQIPQCTKSYTDPSSLRKHIKAVH). 4 disordered regions span residues 363–397 (GDDEYEKAKKSRPANYSNRRRPDHRLAPPTGAMSH), 594–682 (EVEP…GSGE), 875–895 (RNVGGFGDEEDRNNRGHDQDR), and 1057–1110 (QEQP…RHQF). Over residues 597 to 606 (PLQQQQQQEP) the composition is skewed to low complexity. Residues 641 to 652 (GNNGDGGFGGSG) show a composition bias toward gly residues. The span at 669–678 (PISQNGSRAS) shows a compositional bias: polar residues. Positions 886–895 (RNNRGHDQDR) are enriched in basic and acidic residues. Positions 1057–1066 (QEQPTSSFSS) are enriched in polar residues. The span at 1076–1086 (ALPPPPPPPAP) shows a compositional bias: pro residues. The span at 1092 to 1103 (SADNKDDSENIP) shows a compositional bias: basic and acidic residues.

This sequence belongs to the GLI C2H2-type zinc-finger protein family. Interacts with the MX regulatory domain of tra-2. Expressed in intestine and gonads (at protein level).

The protein resides in the cytoplasm. It is found in the nucleus. Its function is as follows. Plays a major role in controlling sexual phenotype. Terminal global regulator in a well-characterized cascade of sex-determining genes. Promotes female development. Interacts with tra-2 to promote spermatogenesis. Promotes spermatogenesis through the Tip60 HAT complex and by regulating the expression of genes, such as fog-3, required for male development. Association with chromatin and at the fog-3 promoter requires wdr-5.1, and may also require wdr-5.2. With trr-1, activates the fog-3 gene to determine sperm/oocyte cell fate. In hermaphrodites, binds to an intronic regulatory site in the ceh-30 gene, preventing ceh-30 transcription and thereby preventing survival of the CEM (cephalic male) sensory neurons. Represses the expression of the transcription factor dmd-3 in hermaphrodites to govern the timing and extent of male tail tip morphogenesis. Plays a role in controlling the sex-specific differentiation of PHC sensory neurons and represses the development of male-specific morphological features. This chain is Sex-determining transformer protein 1, found in Caenorhabditis elegans.